The following is a 230-amino-acid chain: Calcyclin-binding protein (230 aa).

Residues 1 to 82 (MSSALEELQK…YTVKISNYGW (82 aa)) form an interaction with SIAH1 region. Serine 3 carries the post-translational modification Phosphoserine. An N6-acetyllysine mark is found at lysine 10 and lysine 21. Serine 36 bears the Phosphoserine mark. Positions 38–59 (IETEMKNKMQQKSQRKAELTEN) are disordered. The 95-residue stretch at 75 to 169 (VKISNYGWDQ…AENTRWDYLT (95 aa)) folds into the CS domain. Residues 75–230 (VKISNYGWDQ…EKQAKGDTDF (156 aa)) form an interaction with SKP1 region. Residues lysine 87 and lysine 120 each carry the N6-acetyllysine modification. The interaction with S100A6 stretch occupies residues 156-230 (CRKKAENTRW…EKQAKGDTDF (75 aa)). Residues 170-230 (QVEKECKEKE…EKQAKGDTDF (61 aa)) enclose the SGS domain.

In terms of assembly, monomer or homodimer. Component of some large E3 complex at least composed of UBE2D1, SIAH1, CACYBP/SIP, SKP1, APC and TBL1X. Interacts directly with SIAH1, SIAH2 and SKP1. Interacts with proteins of the S100 family S100A1, S100A6, S100B, S100P and S100A12 in a calcium-dependent manner. Phosphorylated on serine residues. Phosphorylated upon induction by RA or at high calcium concentrations.

It is found in the nucleus. Its subcellular location is the cytoplasm. May be involved in calcium-dependent ubiquitination and subsequent proteasomal degradation of target proteins. Probably serves as a molecular bridge in ubiquitin E3 complexes. Participates in the ubiquitin-mediated degradation of beta-catenin (CTNNB1). This chain is Calcyclin-binding protein (CACYBP), found in Bos taurus (Bovine).